Here is a 772-residue protein sequence, read N- to C-terminus: MGNCCSTFRAVFKPNEGSGGGIPLMPVRGGSTRRPDSLPKPPAAVVPSPPSPGDVPDAGVAPEVASVKEVDVLLAENGDAHRTRHYELMDREKEPRLVVRRGQPFAVSVTLSRPYNPDIDAISFVFTVEDAEKPSYGQGTLVAVPLLAKGAESGAAWNAVLDSSADDILRIQITPAADAIVGKWKMDIDTKLKNDGAVSYSYKDPFYILYNPWCRQDQVFLEGEELLQEYVLNDTGLIWRGSYNRLRPCVWKYAQFEKEILDCALYLVSKIGGVRPSECGDPVRVCRAISAAVNSPDDNGAVMGNWSNDYGGGTPPTKWIGSMKILQQFYKNKKPVKYGQCWVFAGVLTTVCRALGLPARTVTTYSAAHDTQNSLTVDYFVDDKGEIMEEMNSDSIWNFHVWTEVWMERPDLMPGDGAHYGGWQAVDSTPQELSDNMYRCGPAPVVAVKQGEVLRPYDSAYVFAEVNADKVFWRYSGPTQPLKLIRKDMLGIGQNISTKAVGRFQREDITNTYKYPEKSVEERAAMLKALRQSESLFSRYYLNEDFNDIHFNFELRDDIVIGSPFSVVVVMKNRSNQQDYTVTVLLRVDTVLYTGHVKDGVKKEKVERLIKAGAVEEVRIDVSYEDYYKHLVDQCAFNIACLATVHDTNYEYFAQDDFRVRKPDIKIKLEGEPVQGQEMSAVATLKNPLPIPVKKGQFLIEGPGIAKTQKIKLSQNIAPGEEASVNFKFTPKYDGRATIAAKFSSKELDDVDGFLNFMVEPKKEVNGTGNAA.

2 S-palmitoyl cysteine lipidation sites follow: Cys-4 and Cys-5. Residues 15-57 (NEGSGGGIPLMPVRGGSTRRPDSLPKPPAAVVPSPPSPGDVPD) form a disordered region. A compositionally biased stretch (pro residues) spans 38 to 53 (LPKPPAAVVPSPPSPG). Residues His-400 and Asp-427 contribute to the active site. Ca(2+) is bound by residues Asn-467, Asp-469, Glu-517, and Glu-522.

Belongs to the transglutaminase superfamily. Transglutaminase family. Ca(2+) serves as cofactor. In terms of tissue distribution, has an annular, or ring-like expression pattern in epithelial annuli of developing limb segment boundary cells. In embryos, it is seen in gastrulating cells, in cells surrounding rapidly dividing neuroblasts, and in muscle pioneer cells invaginating to form apodemes.

It is found in the cell membrane. It carries out the reaction L-glutaminyl-[protein] + L-lysyl-[protein] = [protein]-L-lysyl-N(6)-5-L-glutamyl-[protein] + NH4(+). In terms of biological role, participates in morphogenetic activities of the cells, maybe by stabilizing the membrane or subcortical structures of cells that are under mechanical stress. Probably catalyzes the cross-linking of proteins and the conjugation of polyamines to proteins. The protein is Annulin of Schistocerca americana (American grasshopper).